The primary structure comprises 241 residues: Zinc finger CCHC domain-containing protein 24 (241 aa).

A phosphoserine mark is found at Ser-65 and Ser-93. The CCHC-type zinc finger occupies 132-149 (YLCHLCFNKGHYIKDCPQ).

This is Zinc finger CCHC domain-containing protein 24 from Mus musculus (Mouse).